The primary structure comprises 639 residues: MNGNNNMNNNGKSNNKKKNKNWILGLVVVFLISAIFMSYFIRGGESYKNVPYSTFQSYLDNGLVESVVIIDKNLIQFVVKGSNFAKSYFSTSIPYLDINLLSELKNKKVELSSGKSQASLIGVLLQTLPWILFFIFFFFIFRQTQGGGGKVFTFGKSNAQKYEAGKNKITFKDVAGQEEVKQELREVVEFLKNPKKFEKIGAKIPKGVLLVGSPGTGKTLLAKAVAGEAGVSFFHMSGSDFVEMFVGVGASRVRDLFDNARKNSPCIIFIDELDAVGRSRGAGLGGGHDEREQTLNQLLVEMDGFGTHTNVIVMAATNRPDVLDSALLRPGRFDRQVTVSLPDIKEREAILNIHSLKTKLSKDINLQVIARATPGASGADLANLINEGALIAARNNQDEILMKDMEEARDKILMGVAKKSMTITDRQKLETAYHEAGHALLHYYLEHADPLHKVTIIPRGRALGVAFSLPREDRLSINKHQILDKIKICYGGYASEQINLGVTTAGVQNDLMQATSLAKKMVTEWGMGEEVGPIFLVDDEAPIFLPKEFSKAKAYSENTADKVDREVKRILEECLKEASDILLKHKDQLVKLAKELVLKETLTDKEVRELLGFEANKDEYDLFSSDSTTKEVKGEDVKG.

Over 1–20 the chain is Cytoplasmic; it reads MNGNNNMNNNGKSNNKKKNK. Residues 21–41 traverse the membrane as a helical segment; it reads NWILGLVVVFLISAIFMSYFI. Residues 42–120 are Periplasmic-facing; the sequence is RGGESYKNVP…LSSGKSQASL (79 aa). A helical transmembrane segment spans residues 121-141; that stretch reads IGVLLQTLPWILFFIFFFFIF. Over 142 to 639 the chain is Cytoplasmic; it reads RQTQGGGGKV…KEVKGEDVKG (498 aa). ATP is bound at residue 212–219; that stretch reads GSPGTGKT. Residue histidine 434 participates in Zn(2+) binding. Glutamate 435 is a catalytic residue. Residues histidine 438 and aspartate 510 each coordinate Zn(2+).

The protein in the central section; belongs to the AAA ATPase family. This sequence in the C-terminal section; belongs to the peptidase M41 family. Homohexamer. The cofactor is Zn(2+).

Its subcellular location is the cell inner membrane. Functionally, acts as a processive, ATP-dependent zinc metallopeptidase for both cytoplasmic and membrane proteins. Plays a role in the quality control of integral membrane proteins. The sequence is that of ATP-dependent zinc metalloprotease FtsH from Borreliella burgdorferi (strain ZS7) (Borrelia burgdorferi).